Reading from the N-terminus, the 429-residue chain is Glutamate-1-semialdehyde 2,1-aminomutase 1 (429 aa).

K268 bears the N6-(pyridoxal phosphate)lysine mark.

This sequence belongs to the class-III pyridoxal-phosphate-dependent aminotransferase family. HemL subfamily. As to quaternary structure, homodimer. Requires pyridoxal 5'-phosphate as cofactor.

The protein resides in the cytoplasm. The enzyme catalyses (S)-4-amino-5-oxopentanoate = 5-aminolevulinate. Its pathway is porphyrin-containing compound metabolism; protoporphyrin-IX biosynthesis; 5-aminolevulinate from L-glutamyl-tRNA(Glu): step 2/2. The sequence is that of Glutamate-1-semialdehyde 2,1-aminomutase 1 from Listeria welshimeri serovar 6b (strain ATCC 35897 / DSM 20650 / CCUG 15529 / CIP 8149 / NCTC 11857 / SLCC 5334 / V8).